Here is a 549-residue protein sequence, read N- to C-terminus: Cation/acetate symporter ActP (549 aa).

13 consecutive transmembrane segments (helical) span residues 33 to 53, 77 to 97, 103 to 123, 148 to 168, 183 to 203, 206 to 226, 262 to 282, 303 to 323, 355 to 375, 404 to 424, 428 to 448, 464 to 484, and 493 to 513; these read WQAI…TYWA, LAIA…ALVF, GLIY…LIAE, ILSA…QMVG, IAVV…GMLA, WVQI…AFMV, ISAL…PHIL, GFMG…IMLV, LFLG…VAGL, VSKI…VLFE, IAFM…PIIL, GGWL…TIWV, and IFPY…GIWF.

This sequence belongs to the sodium:solute symporter (SSF) (TC 2.A.21) family.

The protein localises to the cell inner membrane. Its function is as follows. Transports acetate. The sequence is that of Cation/acetate symporter ActP from Salmonella agona (strain SL483).